We begin with the raw amino-acid sequence, 344 residues long: Phosphoribosylformylglycinamidine cyclo-ligase (344 aa).

Belongs to the AIR synthase family.

The protein localises to the cytoplasm. It carries out the reaction 2-formamido-N(1)-(5-O-phospho-beta-D-ribosyl)acetamidine + ATP = 5-amino-1-(5-phospho-beta-D-ribosyl)imidazole + ADP + phosphate + H(+). It participates in purine metabolism; IMP biosynthesis via de novo pathway; 5-amino-1-(5-phospho-D-ribosyl)imidazole from N(2)-formyl-N(1)-(5-phospho-D-ribosyl)glycinamide: step 2/2. This is Phosphoribosylformylglycinamidine cyclo-ligase from Exiguobacterium sibiricum (strain DSM 17290 / CCUG 55495 / CIP 109462 / JCM 13490 / 255-15).